The following is a 243-amino-acid chain: rRNA adenine N-6-methyltransferase (243 aa).

The S-adenosyl-L-methionine site is built by Asn-11, Ile-13, Gly-38, Glu-59, Asp-84, and Asn-101.

The protein belongs to the class I-like SAM-binding methyltransferase superfamily. rRNA adenine N(6)-methyltransferase family.

The enzyme catalyses adenosine(2085) in 23S rRNA + 2 S-adenosyl-L-methionine = N(6)-dimethyladenosine(2085) in 23S rRNA + 2 S-adenosyl-L-homocysteine + 2 H(+). In terms of biological role, this protein produces a dimethylation of the adenine residue at position 2085 in 23S rRNA, resulting in reduced affinity between ribosomes and macrolide-lincosamide-streptogramin B antibiotics. This chain is rRNA adenine N-6-methyltransferase (ermA1), found in Staphylococcus aureus (strain Mu50 / ATCC 700699).